We begin with the raw amino-acid sequence, 220 residues long: Aspartic protease inhibitor 2 (220 aa).

An N-terminal signal peptide occupies residues 1–23; that stretch reads MMKCLFLLCLCLLPIVVFSSTFT. A propeptide spanning residues 24-32 is cleaved from the precursor; that stretch reads SQNLIDLPS. Positions 26–31 match the Vacuolar targeting signal motif; the sequence is NLIDLP. The N-linked (GlcNAc...) asparagine glycan is linked to asparagine 51. Disulfide bonds link cysteine 80-cysteine 125 and cysteine 174-cysteine 185.

This sequence belongs to the protease inhibitor I3 (leguminous Kunitz-type inhibitor) family. As to expression, tubers.

The protein resides in the vacuole. Inhibitor of cathepsin D (aspartic protease). May also inhibit trypsin and chymotrypsin (serine proteases). Protects the plant by inhibiting proteases of invading organisms. This is Aspartic protease inhibitor 2 from Solanum tuberosum (Potato).